The chain runs to 160 residues: MVKAIWAMDQNGLIGNGNSLPWRIKAELQHFRQTTLHQDVLMGSATYLSLPPVFSERNVYILTRNLNFNPPDKGCLTKVIHEYENFIQPYLHHPDKHLYICGGAQVYEQLIPRCDALIVSTIFGKYTGDKYLKVDFSPFELTKEISFAEFKVAYYHKIAR.

The DHFR domain maps to 1–160 (MVKAIWAMDQ…KVAYYHKIAR (160 aa)). 5-7 (IWA) contacts substrate. Residues 6–7 (WA) and 14–19 (IGNGNS) each bind NADP(+). Positions 27 and 32 each coordinate substrate. 43–46 (GSAT) provides a ligand contact to NADP(+). Arg57 provides a ligand contact to substrate. NADP(+)-binding positions include 62–65 (LTRN) and 101–106 (CGGAQV). Ser120 contributes to the substrate binding site.

Belongs to the dihydrofolate reductase family.

The enzyme catalyses (6S)-5,6,7,8-tetrahydrofolate + NADP(+) = 7,8-dihydrofolate + NADPH + H(+). The protein operates within cofactor biosynthesis; tetrahydrofolate biosynthesis; 5,6,7,8-tetrahydrofolate from 7,8-dihydrofolate: step 1/1. Its function is as follows. Key enzyme in folate metabolism. Catalyzes an essential reaction for de novo glycine and purine synthesis, and for DNA precursor synthesis. This is Dihydrofolate reductase (folA) from Mycoplasma pneumoniae (strain ATCC 29342 / M129 / Subtype 1) (Mycoplasmoides pneumoniae).